We begin with the raw amino-acid sequence, 508 residues long: Phenylacetaldehyde synthase (508 aa).

Residues H203 and H318 each coordinate L-phenylalanine. K319 bears the N6-(pyridoxal phosphate)lysine mark. An L-phenylalanine-binding site is contributed by F348.

The protein belongs to the group II decarboxylase family. As to quaternary structure, homotetramer. Pyridoxal 5'-phosphate serves as cofactor.

It carries out the reaction L-phenylalanine + O2 + H2O + H(+) = 2-phenylacetaldehyde + H2O2 + NH4(+) + CO2. Its function is as follows. Bifunctional enzyme that catalyzes the decarboxylation of L-phenylalanine to produce 2-phenylethylamine, which is then oxidized to form 2-phenylacetaldehyde, a constituent of floral scent in petals. 2-phenylacetaldehyde is a precursor of 2-phenylethanol, another constituent of floral scent in petals. This Rosa hybrid cultivar protein is Phenylacetaldehyde synthase.